We begin with the raw amino-acid sequence, 624 residues long: Phosphoenolpyruvate carboxykinase (ATP) 1 (624 aa).

The segment at 1–22 (MASPNGGVTTYDYDDSDSAAPV) is disordered. 322-329 (GLSGTGKT) lines the ATP pocket.

It belongs to the phosphoenolpyruvate carboxykinase (ATP) family. In terms of assembly, homohexamer. In terms of tissue distribution, green leaves but not in roots or etiolated shoots.

Its subcellular location is the cytoplasm. The enzyme catalyses oxaloacetate + ATP = phosphoenolpyruvate + ADP + CO2. It functions in the pathway carbohydrate biosynthesis; gluconeogenesis. The chain is Phosphoenolpyruvate carboxykinase (ATP) 1 (PCK1) from Urochloa panicoides (Panic liverseed grass).